Here is a 67-residue protein sequence, read N- to C-terminus: Ferredoxin (67 aa).

4Fe-4S ferredoxin-type domains lie at 3–31 (WKVS…MNDE) and 36–67 (PKVE…IEEA). [4Fe-4S] cluster-binding residues include Cys-12, Asp-15, and Cys-18. An intrachain disulfide couples Cys-22 to Cys-49. Cys-57 is a binding site for [4Fe-4S] cluster.

The cofactor is [4Fe-4S] cluster. [3Fe-4S] cluster serves as cofactor.

Ferredoxins are iron-sulfur proteins that transfer electrons in a wide variety of metabolic reactions. The sequence is that of Ferredoxin (fdxA) from Pyrococcus abyssi (strain GE5 / Orsay).